Here is a 425-residue protein sequence, read N- to C-terminus: Dihydroorotase (425 aa).

2 residues coordinate Zn(2+): H59 and H61. Substrate contacts are provided by residues 61-63 (HLR) and N93. Zn(2+) contacts are provided by D151, H178, and H231. N277 lines the substrate pocket. A Zn(2+)-binding site is contributed by D304. The active site involves D304. Residues H308 and 322 to 323 (FG) contribute to the substrate site.

This sequence belongs to the metallo-dependent hydrolases superfamily. DHOase family. Class I DHOase subfamily. Requires Zn(2+) as cofactor.

It catalyses the reaction (S)-dihydroorotate + H2O = N-carbamoyl-L-aspartate + H(+). It functions in the pathway pyrimidine metabolism; UMP biosynthesis via de novo pathway; (S)-dihydroorotate from bicarbonate: step 3/3. Functionally, catalyzes the reversible cyclization of carbamoyl aspartate to dihydroorotate. The sequence is that of Dihydroorotase from Staphylococcus epidermidis (strain ATCC 12228 / FDA PCI 1200).